We begin with the raw amino-acid sequence, 1024 residues long: Protein sumv-1 (1024 aa).

Disordered stretches follow at residues 447–486 (DASQFGGGKKKQRLPPRRSPSFGTSPNSYQFHQQSQKKMP), 501–564 (NFQG…RRGV), 577–617 (PSRH…RSQA), 645–664 (SQMAGQRPGMTPSAQQGSPQ), 710–739 (VRSGSSSSVAGPSRSSVASGSQHTALDTVQ), and 773–1024 (AGNS…EEEL). Composition is skewed to polar residues over residues 467–486 (SFGTSPNSYQFHQQSQKKMP), 501–514 (NFQGWKNQSTSSAT), and 528–542 (RSQQPKMIPLEQTQD). Over residues 584 to 600 (SPLTPSTSTSSSQLLAP) the composition is skewed to low complexity. Positions 605–617 (QPGTSSQTFRSQA) are enriched in polar residues. Low complexity-rich tracts occupy residues 710-730 (VRSGSSSSVAGPSRSSVASGS) and 784-809 (AGAPGAKESSKAAGGAQKGTSAASTS). A compositionally biased stretch (polar residues) spans 810–832 (VPEPTKSSESSVDPQSDVSFSNP). A compositionally biased stretch (low complexity) spans 859 to 870 (TLASESTSSEAT). The span at 873–883 (HDTTSSSSAET) shows a compositional bias: polar residues. The span at 903–914 (PEKEKEKIDRPK) shows a compositional bias: basic and acidic residues. Low complexity-rich tracts occupy residues 916–943 (PKSSTKRTTPTPSGRTPRAAAIAANQAI), 952–962 (SASTSSSAAST), and 970–986 (LLAELSVAAAAEEQQQA). Polar residues predominate over residues 987 to 998 (IGSTSKNGGSTK).

The protein resides in the nucleus. Its subcellular location is the cytoplasm. It is found in the cell projection. It localises to the axon. In terms of biological role, nuclear factor that influences the activity of genes involved in vulval development. The protein is Protein sumv-1 of Caenorhabditis elegans.